Consider the following 446-residue polypeptide: Tubulin beta-1 chain (446 aa).

The GTP site is built by Gln13, Glu71, Ser140, Gly144, Thr145, Gly146, Asn206, and Asn228. Glu71 contacts Mg(2+). The tract at residues 421–446 (VSEYQQYQDASADDGEEYEEDAPMEE) is disordered. Positions 431–446 (SADDGEEYEEDAPMEE) are enriched in acidic residues.

Belongs to the tubulin family. As to quaternary structure, dimer of alpha and beta chains. A typical microtubule is a hollow water-filled tube with an outer diameter of 25 nm and an inner diameter of 15 nM. Alpha-beta heterodimers associate head-to-tail to form protofilaments running lengthwise along the microtubule wall with the beta-tubulin subunit facing the microtubule plus end conferring a structural polarity. Microtubules usually have 13 protofilaments but different protofilament numbers can be found in some organisms and specialized cells. Requires Mg(2+) as cofactor.

It localises to the cytoplasm. Its subcellular location is the cytoskeleton. Tubulin is the major constituent of microtubules, a cylinder consisting of laterally associated linear protofilaments composed of alpha- and beta-tubulin heterodimers. Microtubules grow by the addition of GTP-tubulin dimers to the microtubule end, where a stabilizing cap forms. Below the cap, tubulin dimers are in GDP-bound state, owing to GTPase activity of alpha-tubulin. In Hypocrea rufa (Trichoderma viride), this protein is Tubulin beta-1 chain (tub1).